Here is a 171-residue protein sequence, read N- to C-terminus: Large ribosomal subunit protein uL10 (171 aa).

It belongs to the universal ribosomal protein uL10 family. In terms of assembly, part of the ribosomal stalk of the 50S ribosomal subunit. The N-terminus interacts with L11 and the large rRNA to form the base of the stalk. The C-terminus forms an elongated spine to which L12 dimers bind in a sequential fashion forming a multimeric L10(L12)X complex.

Functionally, forms part of the ribosomal stalk, playing a central role in the interaction of the ribosome with GTP-bound translation factors. The polypeptide is Large ribosomal subunit protein uL10 (Lactococcus lactis subsp. cremoris (strain SK11)).